The primary structure comprises 159 residues: Serine-protein kinase RsbW (159 aa).

The protein belongs to the anti-sigma-factor family.

The enzyme catalyses L-seryl-[protein] + ATP = O-phospho-L-seryl-[protein] + ADP + H(+). It carries out the reaction L-threonyl-[protein] + ATP = O-phospho-L-threonyl-[protein] + ADP + H(+). Its function is as follows. Negative regulator of sigma-B activity. Phosphorylates and inactivates its specific antagonist protein, RsbV. Upon phosphorylation of RsbV, RsbW is released and binds to sigma-B, thereby blocking its ability to form an RNA polymerase holoenzyme (E-sigma-B). The chain is Serine-protein kinase RsbW from Staphylococcus aureus (strain Newman).